The sequence spans 413 residues: Arginine biosynthesis bifunctional protein ArgJ (413 aa).

Residues T154, K180, T191, E277, N408, and T413 each contribute to the substrate site. T191 functions as the Nucleophile in the catalytic mechanism.

Belongs to the ArgJ family. As to quaternary structure, heterotetramer of two alpha and two beta chains.

The protein resides in the cytoplasm. It catalyses the reaction N(2)-acetyl-L-ornithine + L-glutamate = N-acetyl-L-glutamate + L-ornithine. The catalysed reaction is L-glutamate + acetyl-CoA = N-acetyl-L-glutamate + CoA + H(+). The protein operates within amino-acid biosynthesis; L-arginine biosynthesis; L-ornithine and N-acetyl-L-glutamate from L-glutamate and N(2)-acetyl-L-ornithine (cyclic): step 1/1. It functions in the pathway amino-acid biosynthesis; L-arginine biosynthesis; N(2)-acetyl-L-ornithine from L-glutamate: step 1/4. Catalyzes two activities which are involved in the cyclic version of arginine biosynthesis: the synthesis of N-acetylglutamate from glutamate and acetyl-CoA as the acetyl donor, and of ornithine by transacetylation between N(2)-acetylornithine and glutamate. The polypeptide is Arginine biosynthesis bifunctional protein ArgJ (Synechocystis sp. (strain ATCC 27184 / PCC 6803 / Kazusa)).